A 152-amino-acid chain; its full sequence is S-protein homolog 4 (152 aa).

A signal peptide spans 1 to 23 (MTTMLKTQVHVVVIYLLIQIAFS). The N-linked (GlcNAc...) asparagine glycan is linked to N71.

Belongs to the plant self-incompatibility (S1) protein family.

It localises to the secreted. The protein is S-protein homolog 4 of Arabidopsis thaliana (Mouse-ear cress).